We begin with the raw amino-acid sequence, 180 residues long: Inner membrane assembly complex subunit 17 (180 aa).

Residues 1 to 36 (MMIRNQLYRKCIIGGGRSILNGWVINGTVPNIGLRY) constitute a mitochondrion transit peptide. The Mitochondrial matrix segment spans residues 37–105 (LRSGIVTRSN…RKTQDIPIKR (69 aa)). Residues 106–128 (FIRPTWMFLLMSSTFYLLGHYIW) traverse the membrane as a helical segment. Residues 129-163 (WKLEYDEVEKELDRQVTALEEELHNLIEEHRVHGE) adopt a coiled-coil conformation. At 129 to 180 (WKLEYDEVEKELDRQVTALEEELHNLIEEHRVHGENEAIKNKKHKHWYKFWS) the chain is on the mitochondrial intermembrane side.

The protein belongs to the INA17 family. As to quaternary structure, component of the inner membrane assembly (INA) complex, composed of INA17 and INA22. Interacts with a subset of F(1)F(0)-ATP synthase subunits of the F(1)-domain and the peripheral stalk.

It localises to the mitochondrion inner membrane. Its function is as follows. Component of the INA complex (INAC) that promotes the biogenesis of mitochondrial F(1)F(0)-ATP synthase. INAC facilitates the assembly of the peripheral stalk and promotes the assembly of the catalytic F(1)-domain with the membrane-embedded F(0)-domain. In Vanderwaltozyma polyspora (strain ATCC 22028 / DSM 70294 / BCRC 21397 / CBS 2163 / NBRC 10782 / NRRL Y-8283 / UCD 57-17) (Kluyveromyces polysporus), this protein is Inner membrane assembly complex subunit 17.